Reading from the N-terminus, the 95-residue chain is Aspartyl/glutamyl-tRNA(Asn/Gln) amidotransferase subunit C (95 aa).

This sequence belongs to the GatC family. Heterotrimer of A, B and C subunits.

It catalyses the reaction L-glutamyl-tRNA(Gln) + L-glutamine + ATP + H2O = L-glutaminyl-tRNA(Gln) + L-glutamate + ADP + phosphate + H(+). It carries out the reaction L-aspartyl-tRNA(Asn) + L-glutamine + ATP + H2O = L-asparaginyl-tRNA(Asn) + L-glutamate + ADP + phosphate + 2 H(+). Allows the formation of correctly charged Asn-tRNA(Asn) or Gln-tRNA(Gln) through the transamidation of misacylated Asp-tRNA(Asn) or Glu-tRNA(Gln) in organisms which lack either or both of asparaginyl-tRNA or glutaminyl-tRNA synthetases. The reaction takes place in the presence of glutamine and ATP through an activated phospho-Asp-tRNA(Asn) or phospho-Glu-tRNA(Gln). The polypeptide is Aspartyl/glutamyl-tRNA(Asn/Gln) amidotransferase subunit C (Acetivibrio thermocellus (strain ATCC 27405 / DSM 1237 / JCM 9322 / NBRC 103400 / NCIMB 10682 / NRRL B-4536 / VPI 7372) (Clostridium thermocellum)).